We begin with the raw amino-acid sequence, 245 residues long: Ribosomal RNA large subunit methyltransferase E (245 aa).

S-adenosyl-L-methionine is bound by residues glycine 83, tryptophan 85, aspartate 111, aspartate 127, and aspartate 156. The active-site Proton acceptor is lysine 196.

The protein belongs to the class I-like SAM-binding methyltransferase superfamily. RNA methyltransferase RlmE family.

The protein resides in the cytoplasm. It carries out the reaction uridine(2552) in 23S rRNA + S-adenosyl-L-methionine = 2'-O-methyluridine(2552) in 23S rRNA + S-adenosyl-L-homocysteine + H(+). Functionally, specifically methylates the uridine in position 2552 of 23S rRNA at the 2'-O position of the ribose in the fully assembled 50S ribosomal subunit. This is Ribosomal RNA large subunit methyltransferase E from Polaromonas naphthalenivorans (strain CJ2).